Here is a 197-residue protein sequence, read N- to C-terminus: uncharacterized protein (197 aa).

This is an uncharacterized protein from Caenorhabditis elegans.